Reading from the N-terminus, the 452-residue chain is Lamina-associated polypeptide 2, isoform beta (452 aa).

The tract at residues 1–409 (MPEFLEDPSV…KSEKTKKGRS (409 aa)) is nucleoplasmic. Residues 5 to 48 (LEDPSVLTKDKLKSELVANNVTLPAGEQRKDVYVQLYLQHLTAR) form the LEM-like domain. 2 disordered regions span residues 48–113 (RNRP…DVTE) and 149–264 (REQG…VEPS). The interval 49-107 (NRPPLAAGANSKGPPDFSSDEEREPTPVLGSGASVGRGRGAVGRKATKKTDKPRPEDKD) is linker. Ser-66 and Ser-67 each carry phosphoserine. Thr-74 carries the post-translational modification Phosphothreonine. Ser-82 carries the phosphoserine modification. Omega-N-methylarginine is present on residues Arg-85 and Arg-87. Residues 96 to 105 (KKTDKPRPED) show a composition bias toward basic and acidic residues. The 45-residue stretch at 108–152 (DLDVTELSNEELLEQLVRYGVNPGPIVGTTRKLYEKKLLKLREQG) folds into the LEM domain. Residues 137 to 242 (TRKLYEKKLL…TSGSSKGGPL (106 aa)) are NAKAP95-binding N. Polar residues predominate over residues 154 to 177 (ESRSSTPLPTVSSSAENTRQNGSN). Phosphoserine is present on residues Ser-155 and Ser-158. Thr-159 is subject to Phosphothreonine. 5 positions are modified to phosphoserine: Ser-165, Ser-167, Ser-176, Ser-179, and Ser-183. Positions 178-202 (DSDRYSDNDEDSKIELKLEKREPLK) are enriched in basic and acidic residues. Lys-206 carries the post-translational modification N6-acetyllysine. Residues 298–370 (TGNFKHASSI…SCRRPIKGAA (73 aa)) are binds lamins B. Residues 299 to 373 (GNFKHASSIL…RPIKGAAGRP (75 aa)) form an NAKAP95-binding C region. Residues Ser-305, Ser-306, and Ser-361 each carry the phosphoserine modification. Position 388 is an N6-acetyllysine (Lys-388). The chain crosses the membrane as a helical; Signal-anchor for type II membrane protein span at residues 410-430 (VPMWIKMLLFALVAGFLFLVY). The Lumenal segment spans residues 431–452 (QAMETNQGNPFTNFLQDTKISN).

The protein belongs to the LEM family. Interacts with LMNB1, LMNB2, BANF1, AKAP8L, GMCL and chromosomes. In terms of processing, mitosis-specific phosphorylation specifically abolishes its binding to lamin B and chromosomes.

It is found in the nucleus inner membrane. The protein resides in the chromosome. Its function is as follows. Binds directly to lamin B1 and chromosomes in a mitotic phosphorylation-regulated manner. May play an important role in nuclear envelope reassembly at the end of mitosis and/or anchoring of the nuclear lamina and interphase chromosomes to the nuclear envelope. This is Lamina-associated polypeptide 2, isoform beta (Tmpo) from Rattus norvegicus (Rat).